The sequence spans 258 residues: UPF0246 protein YaaA (258 aa).

Belongs to the UPF0246 family.

The sequence is that of UPF0246 protein YaaA from Shigella flexneri serotype 5b (strain 8401).